The primary structure comprises 27 residues: Phospholipase A2 2 (27 aa).

The segment at 1-27 (FMKVIDPGTKWCGPGNKAADDTDNGKN) is disordered. Ca(2+) contacts are provided by W11, G13, and G15. Residues 18 to 27 (AADDTDNGKN) are compositionally biased toward basic and acidic residues.

It belongs to the phospholipase A2 family. Ca(2+) serves as cofactor. In terms of tissue distribution, expressed by the venom gland.

Its subcellular location is the secreted. The catalysed reaction is a 1,2-diacyl-sn-glycero-3-phosphocholine + H2O = a 1-acyl-sn-glycero-3-phosphocholine + a fatty acid + H(+). Its function is as follows. PLA2 catalyzes the calcium-dependent hydrolysis of the 2-acyl groups in 3-sn-phosphoglycerides. This chain is Phospholipase A2 2, found in Opisthacanthus cayaporum (South American scorpion).